The primary structure comprises 1255 residues: Mucin-1 (1255 aa).

A signal peptide spans 1-23 (MTPGTQSPFFLLLLLTVLTVVTG). Residues 23–1033 (GSGHASSTPG…PLTSSNHSTS (1011 aa)) form a disordered region. Residues 24–1158 (SGHASSTPGG…SAQSGAGVPG (1135 aa)) lie on the Extracellular side of the membrane. The span at 38-54 (SATQRSSVPSSTEKNAV) shows a compositional bias: polar residues. A compositionally biased stretch (low complexity) spans 55 to 75 (SMTSSVLSSHSPGSGSSTTQG). The 1; approximate repeat unit spans residues 61 to 80 (LSSHSPGSGSSTTQGQDVTL). The stretch at 81-100 (APATEPASGSAATWGQDVTS) is one 2; approximate repeat. Polar residues predominate over residues 90–102 (SAATWGQDVTSVP). Tandem repeats lie at residues 101–120 (VPVT…DVTS), 121–140 (APDN…GVTS), 141–160 (APDT…GVTS), 161–180 (APDT…GVTS), 181–200 (APDT…GVTS), 201–220 (APDT…GVTS), 221–240 (APDT…GVTS), 241–260 (APDT…GVTS), 261–280 (APDT…GVTS), 281–300 (APDT…GVTS), 301–320 (APDT…GVTS), 321–340 (APDT…GVTS), 341–360 (APDT…GVTS), 361–380 (APDT…GVTS), 381–400 (APDT…GVTS), 401–420 (APDT…GVTS), 421–440 (APDT…GVTS), 441–460 (APDT…GVTS), 461–480 (APDT…GVTS), 481–500 (APDT…GVTS), 501–520 (APDT…GVTS), 521–540 (APDT…GVTS), 541–560 (APDT…GVTS), 561–580 (APDT…GVTS), 581–600 (APDT…GVTS), 601–620 (APDT…GVTS), 621–640 (APDT…GVTS), 641–660 (APDT…GVTS), 661–680 (APDT…GVTS), 681–700 (APDT…GVTS), 701–720 (APDT…GVTS), 721–740 (APDT…GVTS), 741–760 (APDT…GVTS), 761–780 (APDT…GVTS), 781–800 (APDT…GVTS), 801–820 (APDT…GVTS), 821–840 (APDT…GVTS), 841–860 (APDT…GVTS), 861–880 (APDT…GVTS), 881–900 (APDT…GVTS), 901–920 (APDT…GVTS), 921–940 (APDT…GVTS), and 941–960 (APDN…NVTS). Positions 126-965 (PAPGSTAPPA…HNVTSASGSA (840 aa)) are 42 X 20 AA approximate tandem repeats of P-A-P-G-S-T-A-P-P-A-H-G-V-T-S-A-P-D-T-R. O-linked (GalNAc...) threonine glycosylation is found at threonine 131 and threonine 139. Serine 140 carries O-linked (GalNAc...) serine glycosylation. O-linked (GalNAc...) threonine glycosylation occurs at threonine 144. Asparagine 957 is a glycosylation site (N-linked (GlcNAc...) asparagine). The span at 960-970 (SASGSASGSAS) shows a compositional bias: low complexity. The 46; approximate repeat unit spans residues 961–980 (ASGSASGSASTLVHNGTSAR). Composition is skewed to polar residues over residues 971–993 (TLVH…TPFS) and 1001–1033 (TPTT…HSTS). Asparagine 975 carries an N-linked (GlcNAc...) asparagine glycan. A 47; approximate repeat occupies 981–1000 (ATTTPASKSTPFSIPSHHSD). A 48; approximate repeat occupies 1001–1020 (TPTTLASHSTKTDASSTHHS). N-linked (GlcNAc...) asparagine glycans are attached at residues asparagine 1029, asparagine 1055, and asparagine 1133. Positions 1039–1148 (GVSFFFLSFH…VSVSDVPFPF (110 aa)) constitute an SEA domain. Residues 1159–1181 (WGIALLVLVCVLVALAIVYLIAL) form a helical membrane-spanning segment. Residues 1182-1255 (AVCQCRRKNY…PAVAATSANL (74 aa)) are Cytoplasmic-facing. 2 S-palmitoyl cysteine lipidation sites follow: cysteine 1184 and cysteine 1186. An interaction with P53 region spans residues 1192–1228 (GQLDIFPARDTYHPMSEYPTYHTHGRYVPPSSTDRSP). Residue tyrosine 1203 is modified to Phosphotyrosine; by PDGFR. Residues 1203-1206 (YHPM) carry the Interaction with GRB2 motif. Position 1212 is a phosphotyrosine (tyrosine 1212). Residues 1214–1237 (THGRYVPPSSTDRSPYEKVSAGNG) are disordered. Tyrosine 1218 carries the post-translational modification Phosphotyrosine; by PDGFR. Positions 1223 to 1230 (STDRSPYE) are required for interaction with GSK3B. Phosphothreonine; by PKC/PRKCD is present on threonine 1224. Serine 1227 carries the phosphoserine; by GSK3-beta modification. Tyrosine 1229 is modified (phosphotyrosine; by CSK, EGFR and SRC). The Interaction with SRC and ESR1 motif lies at 1229–1232 (YEKV). Residues 1233-1241 (SAGNGGSSL) are required for interaction with beta- and gamma-catenins. Residue tyrosine 1243 is modified to Phosphotyrosine. The short motif at 1243 to 1246 (YTNP) is the Required for interaction with AP1S2 element.

As to quaternary structure, the alpha subunit forms a tight, non-covalent heterodimeric complex with the proteolytically-released beta-subunit. Interaction, via the tandem repeat region, with domain 1 of ICAM1 is implicated in cell migration and metastases. Isoform 1 binds directly the SH2 domain of GRB2, and forms a MUC1/GRB2/SOS1 complex involved in RAS signaling. The cytoplasmic tail (MUC1CT) interacts with several proteins such as SRC, CTNNB1 and ERBs. Interaction with the SH2 domain of CSK decreases interaction with GSK3B. Interacts with CTNNB1/beta-catenin and JUP/gamma-catenin and promotes cell adhesion. Interaction with JUP/gamma-catenin is induced by heregulin. Binds PRKCD, ERBB2, ERBB3 and ERBB4. Heregulin (HRG) stimulates the interaction with ERBB2 and, to a much lesser extent, the interaction with ERBB3 and ERBB4. Interacts with P53 in response to DNA damage. Interacts with KLF4. Interacts with estrogen receptor alpha/ESR1, through its DNA-binding domain, and stimulates its transcription activity. Binds ADAM17. Isoform ZD forms disulfide-linked oligomers. Post-translationally, highly glycosylated (N- and O-linked carbohydrates and sialic acid). O-glycosylated to a varying degree on serine and threonine residues within each tandem repeat, ranging from mono- to penta-glycosylation. The average density ranges from about 50% in human milk to over 90% in T47D breast cancer cells. Further sialylation occurs during recycling. Membrane-shed glycoproteins from kidney and breast cancer cells have preferentially sialyated core 1 structures, while secreted forms from the same tissues display mainly core 2 structures. The O-glycosylated content is overlapping in both these tissues with terminal fucose and galactose, 2- and 3-linked galactose, 3- and 3,6-linked GalNAc-ol and 4-linked GlcNAc predominating. Differentially O-glycosylated in breast carcinomas with 3,4-linked GlcNAc. N-glycosylation consists of high-mannose, acidic complex-type and hybrid glycans in the secreted form MUC1/SEC, and neutral complex-type in the transmembrane form, MUC1/TM. Proteolytic cleavage in the SEA domain occurs in the endoplasmic reticulum by an autoproteolytic mechanism and requires the full-length SEA domain as well as requiring a Ser, Thr or Cys residue at the P + 1 site. Cleavage at this site also occurs on isoform MUC1/X but not on isoform MUC1/Y. Ectodomain shedding is mediated by ADAM17. In terms of processing, dual palmitoylation on cysteine residues in the CQC motif is required for recycling from endosomes back to the plasma membrane. Post-translationally, phosphorylated on tyrosines and serine residues in the C-terminal. Phosphorylation on tyrosines in the C-terminal increases the nuclear location of MUC1 and beta-catenin. Phosphorylation by PKC delta induces binding of MUC1 to beta-catenin/CTNNB1 and thus decreases the formation of the beta-catenin/E-cadherin complex. Src-mediated phosphorylation inhibits interaction with GSK3B. Src- and EGFR-mediated phosphorylation on Tyr-1229 increases binding to beta-catenin/CTNNB1. GSK3B-mediated phosphorylation on Ser-1227 decreases this interaction but restores the formation of the beta-cadherin/E-cadherin complex. On T-cell receptor activation, phosphorylated by LCK. PDGFR-mediated phosphorylation increases nuclear colocalization of MUC1CT and CTNNB1. The N-terminal sequence has been shown to begin at position 24 or 28. Expressed on the apical surface of epithelial cells, especially of airway passages, breast and uterus. Also expressed in activated and unactivated T-cells. Overexpressed in epithelial tumors, such as breast or ovarian cancer and also in non-epithelial tumor cells. Isoform Y is expressed in tumor cells only.

It is found in the apical cell membrane. The protein localises to the secreted. It localises to the cell membrane. Its subcellular location is the cytoplasm. The protein resides in the nucleus. In terms of biological role, the alpha subunit has cell adhesive properties. Can act both as an adhesion and an anti-adhesion protein. May provide a protective layer on epithelial cells against bacterial and enzyme attack. The beta subunit contains a C-terminal domain which is involved in cell signaling, through phosphorylations and protein-protein interactions. Modulates signaling in ERK, SRC and NF-kappa-B pathways. In activated T-cells, influences directly or indirectly the Ras/MAPK pathway. Promotes tumor progression. Regulates TP53-mediated transcription and determines cell fate in the genotoxic stress response. Binds, together with KLF4, the PE21 promoter element of TP53 and represses TP53 activity. This chain is Mucin-1 (MUC1), found in Homo sapiens (Human).